Here is a 152-residue protein sequence, read N- to C-terminus: Eukaryotic translation initiation factor 2 subunit 3 (152 aa).

The residue at position 1 (Ala-1) is an N-acetylalanine. Asn-51 to Asp-54 is a binding site for GTP.

This sequence belongs to the TRAFAC class translation factor GTPase superfamily. Classic translation factor GTPase family. EIF2G subfamily. In terms of assembly, eukaryotic translation initiation factor 2 eIF2 is a heterotrimeric complex composed of an alpha (EIF2S1), a beta (EIF2S2) and a gamma (EIF2S3) chain. eIF2 is member of the 43S pre-initiation complex (43S PIC). Interacts (via C-terminus) with CDC123; the interaction is direct.

Its subcellular location is the cytoplasm. It localises to the cytosol. In terms of biological role, member of the eIF2 complex that functions in the early steps of protein synthesis by forming a ternary complex with GTP and initiator tRNA. This complex binds to a 40S ribosomal subunit, followed by mRNA binding to form the 43S pre-initiation complex (43S PIC). Junction of the 60S ribosomal subunit to form the 80S initiation complex is preceded by hydrolysis of the GTP bound to eIF2 and release of an eIF2-GDP binary complex. In order for eIF2 to recycle and catalyze another round of initiation, the GDP bound to eIF2 must exchange with GTP by way of a reaction catalyzed by eIF-2B. This Oryctolagus cuniculus (Rabbit) protein is Eukaryotic translation initiation factor 2 subunit 3 (EIF2S3).